The following is a 174-amino-acid chain: Gamma-crystallin D (174 aa).

Beta/gamma crystallin 'Greek key' domains follow at residues 2–40 (GKITFYEDRGFQGRCYECSSDHVNLQSYFSRCNSIRVDS) and 41–83 (GCWM…RIIP). The interval 84 to 87 (YSGS) is connecting peptide. 2 Beta/gamma crystallin 'Greek key' domains span residues 88–128 (HKMR…NVLD) and 129–171 (GCWI…RRVI).

It belongs to the beta/gamma-crystallin family. Monomer.

Crystallins are the dominant structural components of the vertebrate eye lens. The chain is Gamma-crystallin D (CRYGD) from Macropus fuliginosus (Western gray kangaroo).